A 519-amino-acid polypeptide reads, in one-letter code: Protein BANP (519 aa).

Phosphoserine occurs at positions 19, 90, and 100. Positions 53–90 (IKTICLRLDSIEAKLQALEATCKSLEEKLDLVTNKQHS) form a coiled coil. Lys-133 is covalently cross-linked (Glycyl lysine isopeptide (Lys-Gly) (interchain with G-Cter in SUMO2)). Residues 152–342 (NAVPGRRQNT…FSRRTPNSSS (191 aa)) are interaction with CUX1 and HDAC1. Over residues 168–177 (GQEDSHHEDG) the composition is skewed to basic and acidic residues. The segment at 168–196 (GQEDSHHEDGESGSEASDSVSSCGQAGSQ) is disordered. Residues 180–189 (GSEASDSVSS) show a composition bias toward low complexity. In terms of domain architecture, BEN spans 226-322 (EMRVRCAIIP…SKCRTAWRRK (97 aa)). Lys-275 carries the post-translational modification N6-acetyllysine. Residues 327 to 364 (SLAVKSFSRRTPNSSSYCPSEPMMSTPPPASELPQPQP) form a disordered region. Residues 335–344 (RRTPNSSSYC) show a composition bias toward polar residues. Residues Thr-337 and Thr-352 each carry the phosphothreonine modification. A DNA-binding region spans residues 342 to 393 (SYCPSEPMMSTPPPASELPQPQPQPQALHYALANAQQVQIHQIGEDGQVQVG). The span at 351 to 364 (STPPPASELPQPQP) shows a compositional bias: pro residues.

The protein belongs to the BANP/SMAR1 family. As to quaternary structure, part of a corepressor complex containing BANP, HDAC1, SIN3A, SIN3B, RBL1 and RBL2. Forms a trimeric complex in the nucleus consisting of BANP, HDAC6 and KHDRBS1/SAM68; HDAC6 keeps KHDRBS1 in a deacetylated state which inhibits the inclusion of CD44 alternate exons. The complex is disrupted by MAPK1/MAPK3-mediated phosphorylation of BANP which results in BANP export to the cytoplasm. This facilitates acetylation of KHDRBS1 and CD44 variant exon inclusion. Interacts with TP53. Interacts with CUX1/CDP. Interacts with HDAC1. Post-translationally, MAPK1/MAPK3-mediated phosphorylation at Thr-337 and Thr-352 results in export to the cytoplasm. As to expression, down-regulated in breast cancer cell lines.

The protein resides in the nucleus. The protein localises to the nucleus speckle. Its subcellular location is the cytoplasm. In terms of biological role, controls V(D)J recombination during T-cell development by repressing T-cell receptor (TCR) beta enhancer function. Binds to scaffold/matrix attachment region beta (S/MARbeta), an ATC-rich DNA sequence located upstream of the TCR beta enhancer. Represses cyclin D1 transcription by recruiting HDAC1 to its promoter, thereby diminishing H3K9ac, H3S10ph and H4K8ac levels. Promotes TP53 activation, which causes cell cycle arrest. Plays a role in the regulation of alternative splicing. Binds to CD44 pre-mRNA and negatively regulates the inclusion of CD44 proximal variable exons v2-v6 but has no effect on distal variable exons v7-v10. This chain is Protein BANP (BANP), found in Homo sapiens (Human).